The primary structure comprises 146 residues: MGFTAQQDALVGSSYEAFKQNLPSNSVLFYTLILEKAPAAKDMFSFLKASGPTHSPQLQAHAEKVFGLTRDAAAQLLAKGEVTLADAGLGAVHVQKAVADPHFAVVKEALLKTVQAAVGDKWSEDLSTAWGVAYDGLAAAIKKAMS.

A Globin domain is found at 2–146 (GFTAQQDALV…LAAAIKKAMS (145 aa)). Serine 13 and serine 14 each carry phosphoserine; by CCAMK. Tyrosine 30 is subject to Nitrated tyrosine. A phosphoserine; by CCAMK mark is found at serine 45 and serine 55. Serine 45 contributes to the heme b binding site. Histidine 61 provides a ligand contact to O2. The heme b site is built by lysine 64, histidine 93, and lysine 96. The residue at position 123 (serine 123) is a Phosphoserine; by CCAMK. Position 134 is a nitrated tyrosine (tyrosine 134).

It belongs to the plant globin family. As to quaternary structure, monomer. Post-translationally, nitrated in effective nodules and particularly in hypoxic conditions; this mechanism may play a protective role in the symbiosis by buffering toxic peroxynitrite NO(2)(-). Nitration level decrease during nodule senescence. Phosphorylated by CCAMK at serine residues in a Ca(2+)-dependent manner; the phosphorylation at Ser-45 disrupts the molecular environment of its porphyrin ring oxygen binding pocket, thus leading to a reduced oxygen consumption and to the delivery of oxygen O(2) to symbiosomes. As to expression, specifically and strongly expressed in root nodules and at low levels in seedlings.

Its subcellular location is the cytoplasm. It localises to the cytosol. The protein localises to the nucleus. Leghemoglobin that reversibly binds oxygen O(2) through a pentacoordinated heme iron. In root nodules, facilitates the diffusion of oxygen to the bacteroids while preventing the bacterial nitrogenase from being inactivated by buffering dioxygen, nitric oxide and carbon monoxide, and promoting the formation of reactive oxygen species (ROS, e.g. H(2)O(2)). This role is essential for symbiotic nitrogen fixation (SNF). This chain is Leghemoglobin 1, found in Lotus japonicus (Lotus corniculatus var. japonicus).